The primary structure comprises 402 residues: uncharacterized protein (402 aa).

A disordered region spans residues 332-402 (MFSSSSSSSE…PEPPPGKPGR (71 aa)). A compositionally biased stretch (polar residues) spans 370 to 379 (SETTSLQQYS). Pro residues predominate over residues 393-402 (PEPPPGKPGR).

This is an uncharacterized protein from Mus musculus (Mouse).